The following is a 247-amino-acid chain: Large ribosomal subunit protein uL3 (247 aa).

Disordered regions lie at residues 140–164 (SHRSIGSTGGRQDPGKTFKNKKMPG) and 212–247 (LPKEAPKPGKFKVVGDAQAVDEDKAPADTPAEKEGA). The residue at position 151 (Gln151) is an N5-methylglutamine. Residues 232–247 (DEDKAPADTPAEKEGA) are compositionally biased toward basic and acidic residues.

The protein belongs to the universal ribosomal protein uL3 family. In terms of assembly, part of the 50S ribosomal subunit. Forms a cluster with proteins L14 and L19. Post-translationally, methylated by PrmB.

One of the primary rRNA binding proteins, it binds directly near the 3'-end of the 23S rRNA, where it nucleates assembly of the 50S subunit. The polypeptide is Large ribosomal subunit protein uL3 (Nitrobacter winogradskyi (strain ATCC 25391 / DSM 10237 / CIP 104748 / NCIMB 11846 / Nb-255)).